The chain runs to 252 residues: Imidazole glycerol phosphate synthase subunit HisF (252 aa).

Residues D11 and D130 contribute to the active site.

The protein belongs to the HisA/HisF family. As to quaternary structure, heterodimer of HisH and HisF.

Its subcellular location is the cytoplasm. The catalysed reaction is 5-[(5-phospho-1-deoxy-D-ribulos-1-ylimino)methylamino]-1-(5-phospho-beta-D-ribosyl)imidazole-4-carboxamide + L-glutamine = D-erythro-1-(imidazol-4-yl)glycerol 3-phosphate + 5-amino-1-(5-phospho-beta-D-ribosyl)imidazole-4-carboxamide + L-glutamate + H(+). The protein operates within amino-acid biosynthesis; L-histidine biosynthesis; L-histidine from 5-phospho-alpha-D-ribose 1-diphosphate: step 5/9. In terms of biological role, IGPS catalyzes the conversion of PRFAR and glutamine to IGP, AICAR and glutamate. The HisF subunit catalyzes the cyclization activity that produces IGP and AICAR from PRFAR using the ammonia provided by the HisH subunit. This Azobacteroides pseudotrichonymphae genomovar. CFP2 protein is Imidazole glycerol phosphate synthase subunit HisF.